The sequence spans 188 residues: UPF0200 protein M164_1169 (188 aa).

Residue 15-22 (GMPGSGKS) participates in ATP binding.

The protein belongs to the UPF0200 family.

The polypeptide is UPF0200 protein M164_1169 (Saccharolobus islandicus (strain M.16.4 / Kamchatka #3) (Sulfolobus islandicus)).